The following is a 216-amino-acid chain: Probable transaldolase (216 aa).

Lys-83 serves as the catalytic Schiff-base intermediate with substrate.

The protein belongs to the transaldolase family. Type 3B subfamily.

The protein resides in the cytoplasm. The enzyme catalyses D-sedoheptulose 7-phosphate + D-glyceraldehyde 3-phosphate = D-erythrose 4-phosphate + beta-D-fructose 6-phosphate. It functions in the pathway carbohydrate degradation; pentose phosphate pathway; D-glyceraldehyde 3-phosphate and beta-D-fructose 6-phosphate from D-ribose 5-phosphate and D-xylulose 5-phosphate (non-oxidative stage): step 2/3. Functionally, transaldolase is important for the balance of metabolites in the pentose-phosphate pathway. This Symbiobacterium thermophilum (strain DSM 24528 / JCM 14929 / IAM 14863 / T) protein is Probable transaldolase.